Here is a 401-residue protein sequence, read N- to C-terminus: F-box protein At1g69090 (401 aa).

A disordered region spans residues 1 to 23; it reads MASPTLALAQSPPPKSPAVSVSQ. The F-box domain maps to 27–74; sequence HCWSKLPLDLMQLVFERLAFLDFERAKSVCSSWQFGSKQSKPNNQIPW.

The sequence is that of F-box protein At1g69090 from Arabidopsis thaliana (Mouse-ear cress).